A 390-amino-acid polypeptide reads, in one-letter code: Sulfate adenylyltransferase (390 aa).

This sequence belongs to the sulfate adenylyltransferase family.

The enzyme catalyses sulfate + ATP + H(+) = adenosine 5'-phosphosulfate + diphosphate. It participates in sulfur metabolism; hydrogen sulfide biosynthesis; sulfite from sulfate: step 1/3. The sequence is that of Sulfate adenylyltransferase (sat) from Synechocystis sp. (strain ATCC 27184 / PCC 6803 / Kazusa).